Here is a 594-residue protein sequence, read N- to C-terminus: MSGRIEYISGPVVKAELPGARLYELVFVGELKLFGEVVRIQGDKAFIQVYEDTTGLKPGEPVERTGEPLSAWLGPTILGRIYDGVQRPLKDIESISKSPFIARGIGYDKAPPLDLNAVFDFKPAVKPGDFVQPGDVLGSVKETELITHYITYPPLPENAPGEVEWVADGKYKVDDVIARIKTKRGVVEVKMWHKWPVRRPRPFREKLPPVEPLITGVRVIDTMFPIAKGGTAAVPGPFGSGKTVMIRTLSMFAQSRIIIPVLCGERGNEAADALQGLLKLKDPSTGRPLLERTTIIVNTSNMPVAAREASVYMGTTLGEYFRDQGYDVLVLADSTSRWAEAMREVALRIGEMPSEEGYPAYLPTRLAEFYERAGRVVLIGSGERVGSLTIAASVSPPGGDFTEPVTSNTLRFIGAFWPLSPRLAYSRHYPAIDWLMAFSRYVDTVEVWWSKNVSPEWRRIRDVLQSILVKEAELQEIVRILGTEALSEYEKHILNVAFMIREGFLKQDAYNPVDTPTSPIKQFLLMKAIYVYYEEGLKAIEAGVPASILRELDTVKRLPRLRMELTNDVAKEELTKFIEALTSEIRSTTAGRRP.

236 to 243 (GPFGSGKT) contacts ATP.

Belongs to the ATPase alpha/beta chains family. Has multiple subunits with at least A(3), B(3), C, D, E, F, H, I and proteolipid K(x).

It is found in the cell membrane. It catalyses the reaction ATP + H2O + 4 H(+)(in) = ADP + phosphate + 5 H(+)(out). Functionally, component of the A-type ATP synthase that produces ATP from ADP in the presence of a proton gradient across the membrane. The A chain is the catalytic subunit. This Pyrobaculum calidifontis (strain DSM 21063 / JCM 11548 / VA1) protein is A-type ATP synthase subunit A.